A 453-amino-acid polypeptide reads, in one-letter code: Probable exopolygalacturonase B (453 aa).

An N-terminal signal peptide occupies residues methionine 1–serine 16. 2 N-linked (GlcNAc...) asparagine glycosylation sites follow: asparagine 185 and asparagine 225. Aspartate 255 (proton donor) is an active-site residue. Cysteine 257 and cysteine 274 are joined by a disulfide. N-linked (GlcNAc...) asparagine glycosylation is found at asparagine 263 and asparagine 275. The active site involves histidine 278. 2 PbH1 repeats span residues isoleucine 295–alanine 316 and isoleucine 327–glutamine 348. Residues asparagine 302, asparagine 329, asparagine 354, and asparagine 366 are each glycosylated (N-linked (GlcNAc...) asparagine). One copy of the PbH1 3 repeat lies at proline 362–asparagine 405. The cysteines at positions 392 and 398 are disulfide-linked. The N-linked (GlcNAc...) asparagine glycan is linked to asparagine 436.

Belongs to the glycosyl hydrolase 28 family.

It is found in the secreted. It catalyses the reaction [(1-&gt;4)-alpha-D-galacturonosyl](n) + H2O = alpha-D-galacturonate + [(1-&gt;4)-alpha-D-galacturonosyl](n-1). In terms of biological role, specific in hydrolyzing the terminal glycosidic bond of polygalacturonic acid and oligogalacturonates. In Aspergillus fumigatus (strain ATCC MYA-4609 / CBS 101355 / FGSC A1100 / Af293) (Neosartorya fumigata), this protein is Probable exopolygalacturonase B (pgxB).